The primary structure comprises 238 residues: Ubiquinone biosynthesis O-methyltransferase (238 aa).

S-adenosyl-L-methionine is bound by residues Arg36, Gly56, Asp77, and Met125.

Belongs to the methyltransferase superfamily. UbiG/COQ3 family.

The catalysed reaction is a 3-demethylubiquinol + S-adenosyl-L-methionine = a ubiquinol + S-adenosyl-L-homocysteine + H(+). It catalyses the reaction a 3-(all-trans-polyprenyl)benzene-1,2-diol + S-adenosyl-L-methionine = a 2-methoxy-6-(all-trans-polyprenyl)phenol + S-adenosyl-L-homocysteine + H(+). Its pathway is cofactor biosynthesis; ubiquinone biosynthesis. Functionally, O-methyltransferase that catalyzes the 2 O-methylation steps in the ubiquinone biosynthetic pathway. In Histophilus somni (strain 2336) (Haemophilus somnus), this protein is Ubiquinone biosynthesis O-methyltransferase.